A 452-amino-acid chain; its full sequence is Alkane uptake protein A (452 aa).

The signal sequence occupies residues 1 to 36 (MSERSVYMVLSPRFSVRAVSLAVAAVSASLSMPTSA).

This sequence belongs to the OmpP1/FadL family. As to quaternary structure, interacts with the inner membrane protein AupB.

It is found in the cell outer membrane. Functionally, required for growth on alkanes. Probably involved in the uptake of micelle-solubilized alkanes. This chain is Alkane uptake protein A, found in Marinobacter nauticus (strain ATCC 49840 / DSM 8798 / CIP 103578 / SP17) (Marinobacter hydrocarbonoclasticus).